The chain runs to 295 residues: Pyridoxal 5'-phosphate synthase subunit PdxS (295 aa).

Asp-23 is a D-ribose 5-phosphate binding site. Lys-80 serves as the catalytic Schiff-base intermediate with D-ribose 5-phosphate. Gly-152 is a binding site for D-ribose 5-phosphate. Arg-164 provides a ligand contact to D-glyceraldehyde 3-phosphate. D-ribose 5-phosphate-binding positions include Gly-213 and 234–235 (GS).

Belongs to the PdxS/SNZ family. In terms of assembly, in the presence of PdxT, forms a dodecamer of heterodimers.

It catalyses the reaction aldehydo-D-ribose 5-phosphate + D-glyceraldehyde 3-phosphate + L-glutamine = pyridoxal 5'-phosphate + L-glutamate + phosphate + 3 H2O + H(+). It functions in the pathway cofactor biosynthesis; pyridoxal 5'-phosphate biosynthesis. Its function is as follows. Catalyzes the formation of pyridoxal 5'-phosphate from ribose 5-phosphate (RBP), glyceraldehyde 3-phosphate (G3P) and ammonia. The ammonia is provided by the PdxT subunit. Can also use ribulose 5-phosphate and dihydroxyacetone phosphate as substrates, resulting from enzyme-catalyzed isomerization of RBP and G3P, respectively. This is Pyridoxal 5'-phosphate synthase subunit PdxS from Methanosphaera stadtmanae (strain ATCC 43021 / DSM 3091 / JCM 11832 / MCB-3).